A 664-amino-acid polypeptide reads, in one-letter code: Exoribonuclease 2 (664 aa).

Residues 193–521 (RIDMTHIPFV…INHRMLKALI (329 aa)) form the RNB domain. The S1 motif domain maps to 568–650 (QTLFTGEIFD…ENRSLVAKPT (83 aa)).

It belongs to the RNR ribonuclease family. RNase II subfamily.

The protein localises to the cytoplasm. The enzyme catalyses Exonucleolytic cleavage in the 3'- to 5'-direction to yield nucleoside 5'-phosphates.. In terms of biological role, involved in mRNA degradation. Hydrolyzes single-stranded polyribonucleotides processively in the 3' to 5' direction. This Vibrio vulnificus (strain CMCP6) protein is Exoribonuclease 2.